Reading from the N-terminus, the 505-residue chain is Lysine--tRNA ligase (505 aa).

Residues E415 and E422 each coordinate Mg(2+).

This sequence belongs to the class-II aminoacyl-tRNA synthetase family. Homodimer. Requires Mg(2+) as cofactor.

It localises to the cytoplasm. The enzyme catalyses tRNA(Lys) + L-lysine + ATP = L-lysyl-tRNA(Lys) + AMP + diphosphate. In Enterobacter sp. (strain 638), this protein is Lysine--tRNA ligase.